The following is a 988-amino-acid chain: Transcriptional regulator of yeast form adherence 5 (988 aa).

C2H2-type zinc fingers lie at residues 7-29 and 35-59; these read YICA…ERSH and FHCL…TVHH. Residues 59–83 are compositionally biased toward polar residues; it reads HTNLNPSTLPSNKSLKNPTTNPLDL. Disordered regions lie at residues 59-129 and 174-229; these read HTNL…SSVG and SMES…SNNN. Residues 84–106 are compositionally biased toward low complexity; sequence SNNEGTTTTTKTGNRKNNSNKNG. 2 stretches are compositionally biased toward polar residues: residues 113–129 and 174–208; these read TNPN…SSVG and SMES…EIVL.

Its subcellular location is the nucleus. Its function is as follows. Transcription factor required for yeast cell adherence to silicone substrate. The sequence is that of Transcriptional regulator of yeast form adherence 5 (TRY5) from Candida albicans (strain SC5314 / ATCC MYA-2876) (Yeast).